A 189-amino-acid chain; its full sequence is Probable nicotinate-nucleotide adenylyltransferase (189 aa).

It belongs to the NadD family.

The enzyme catalyses nicotinate beta-D-ribonucleotide + ATP + H(+) = deamido-NAD(+) + diphosphate. It participates in cofactor biosynthesis; NAD(+) biosynthesis; deamido-NAD(+) from nicotinate D-ribonucleotide: step 1/1. Functionally, catalyzes the reversible adenylation of nicotinate mononucleotide (NaMN) to nicotinic acid adenine dinucleotide (NaAD). This chain is Probable nicotinate-nucleotide adenylyltransferase, found in Bacillus cereus (strain Q1).